The following is a 232-amino-acid chain: Pseudaminic acid cytidylyltransferase (232 aa).

This sequence belongs to the CMP-NeuNAc synthase family. Requires Mg(2+) as cofactor.

The enzyme catalyses pseudaminate + CTP = CMP-pseudaminate + diphosphate. Its function is as follows. Catalyzes the final step in the biosynthesis of pseudaminic acid, a sialic-acid-like sugar that is used to modify flagellin. Mediates the activation of pseudaminic acid with CMP by forming CMP-pseudaminic acid. The sequence is that of Pseudaminic acid cytidylyltransferase (pseF) from Campylobacter jejuni subsp. jejuni serotype O:2 (strain ATCC 700819 / NCTC 11168).